We begin with the raw amino-acid sequence, 178 residues long: Ribosome maturation factor RimM (178 aa).

Positions 93–170 constitute a PRC barrel domain; it reads EGSYYYHELR…ALTADAPAGL (78 aa).

Belongs to the RimM family. Binds ribosomal protein uS19.

The protein resides in the cytoplasm. An accessory protein needed during the final step in the assembly of 30S ribosomal subunit, possibly for assembly of the head region. Essential for efficient processing of 16S rRNA. May be needed both before and after RbfA during the maturation of 16S rRNA. It has affinity for free ribosomal 30S subunits but not for 70S ribosomes. In Deinococcus geothermalis (strain DSM 11300 / CIP 105573 / AG-3a), this protein is Ribosome maturation factor RimM.